Here is a 505-residue protein sequence, read N- to C-terminus: Maturase K (505 aa).

It belongs to the intron maturase 2 family. MatK subfamily.

The protein localises to the plastid. It localises to the chloroplast. In terms of biological role, usually encoded in the trnK tRNA gene intron. Probably assists in splicing its own and other chloroplast group II introns. The protein is Maturase K of Morus indica (Mulberry).